A 317-amino-acid polypeptide reads, in one-letter code: Olfactory receptor 10A5 (317 aa).

Residues 1 to 26 (MAIGNWTEISEFILMSFSSLPTEIQS) lie on the Extracellular side of the membrane. The N-linked (GlcNAc...) asparagine glycan is linked to asparagine 5. Residues 27–47 (LLFLTFLTIYLVTLKGNSLII) form a helical membrane-spanning segment. The Cytoplasmic portion of the chain corresponds to 48–55 (LVTLADPM). The chain crosses the membrane as a helical span at residues 56-76 (LHSPMYFFLRNLSFLEIGFNL). The Extracellular portion of the chain corresponds to 77–100 (VIVPKMLGTLLAQDTTISFLGCAT). Residues cysteine 98 and cysteine 190 are joined by a disulfide bond. A helical membrane pass occupies residues 101-121 (QMYFFFFFGVAECFLLATMAY). Residues 122–140 (DRYVAICSPLHYPVIMNQR) lie on the Cytoplasmic side of the membrane. Residues 141 to 161 (TRAKLAAASWFPGFPVATVQT) traverse the membrane as a helical segment. The Extracellular segment spans residues 162–198 (TWLFSFPFCGTNKVNHFFCDSPPVLKLVCADTALFEI). A helical membrane pass occupies residues 199-218 (YAIVGTILVVMIPCLLILCS). The Cytoplasmic segment spans residues 219-238 (YTRIAAAILKIPSAKGKHKA). The helical transmembrane segment at 239 to 259 (FSTCSSHLLVVSLFYISSSLT) threads the bilayer. Residues 260-272 (YFWPKSNNSPESK) are Extracellular-facing. The chain crosses the membrane as a helical span at residues 273-293 (KLLSLSYTVVTPMLNPIIYSL). Residues 294-317 (RNSEVKNALSRTFHKVLALRNCIP) are Cytoplasmic-facing.

This sequence belongs to the G-protein coupled receptor 1 family. Expressed in the tongue.

The protein resides in the cell membrane. In terms of biological role, odorant receptor (Potential). May be involved in taste perception. The chain is Olfactory receptor 10A5 (OR10A5) from Homo sapiens (Human).